The primary structure comprises 111 residues: Transcription initiation factor IIA subunit 2 (111 aa).

It belongs to the TFIIA subunit 2 family. In terms of assembly, TFIIA is a heterodimer of the large unprocessed subunit 1 and a small subunit gamma. It was originally believed to be a heterotrimer of an alpha, a beta and a gamma subunit. Interacts with NCOA6 general coactivator. TFIIA forms a complex with TBP.

The protein resides in the nucleus. Functionally, TFIIA is a component of the transcription machinery of RNA polymerase II and plays an important role in transcriptional activation. TFIIA in a complex with TBP mediates transcriptional activity. The sequence is that of Transcription initiation factor IIA subunit 2 (gtf2a2) from Paralichthys olivaceus (Bastard halibut).